Here is a 333-residue protein sequence, read N- to C-terminus: Chlorophyllide reductase 35.5 kDa chain (333 aa).

The disordered stretch occupies residues 1 to 22 (MTDAPNLKGFDARLREEAAEEP). Residues 45–50 (GSGKSF) and Lys74 each bind ATP. Ser49 lines the Mg(2+) pocket. Residues Cys130 and Cys165 each contribute to the [4Fe-4S] cluster site. 219-220 (NK) is a binding site for ATP.

The protein belongs to the NifH/BchL/ChlL family. In terms of assembly, homodimer. Chlorophyllide reductase is composed of three subunits; BchX, BchY and BchZ. [4Fe-4S] cluster serves as cofactor.

It catalyses the reaction 3-deacetyl-3-vinylbacteriochlorophyllide a + 2 oxidized [2Fe-2S]-[ferredoxin] + ADP + phosphate = chlorophyllide a + 2 reduced [2Fe-2S]-[ferredoxin] + ATP + H2O + H(+). The enzyme catalyses bacteriochlorophyllide a + 2 oxidized [2Fe-2S]-[ferredoxin] + ADP + phosphate = 3-acetyl-3-devinylchlorophyllide a + 2 reduced [2Fe-2S]-[ferredoxin] + ATP + H2O + H(+). The catalysed reaction is 3-deacetyl-3-(1-hydroxyethyl)bacteriochlorophyllide a + 2 oxidized [2Fe-2S]-[ferredoxin] + ADP + phosphate = 3-devinyl-3-(1-hydroxyethyl)chlorophyllide a + 2 reduced [2Fe-2S]-[ferredoxin] + ATP + H2O + H(+). It functions in the pathway porphyrin-containing compound metabolism; bacteriochlorophyll biosynthesis. Functionally, converts chlorophylls (Chl) into bacteriochlorophylls (BChl) by reducing ring B of the tetrapyrrole. This chain is Chlorophyllide reductase 35.5 kDa chain (bchX), found in Rhodobacter capsulatus (strain ATCC BAA-309 / NBRC 16581 / SB1003).